A 266-amino-acid chain; its full sequence is Zinc transporter ZupT (266 aa).

8 helical membrane passes run 8–28, 36–56, 71–91, 123–143, 152–172, 185–205, 209–229, and 246–266; these read LLLT…ALAV, LALS…MEII, AGAW…WAID, GIFT…AVFF, GIVI…AVAV, FSLS…GYTL, FLTP…MVYI, and LAIT…LLLT. Asparagine 134 and glutamate 137 together coordinate Fe(2+). Zn(2+) contacts are provided by glutamate 137 and histidine 162. Asparagine 163, glutamate 166, and glutamate 195 together coordinate Fe(2+). Glutamate 166 is a binding site for Zn(2+).

This sequence belongs to the ZIP transporter (TC 2.A.5) family. ZupT subfamily.

The protein localises to the cell inner membrane. It carries out the reaction Zn(2+)(in) = Zn(2+)(out). Functionally, mediates zinc uptake. May also transport other divalent cations. The chain is Zinc transporter ZupT from Chlorobium luteolum (strain DSM 273 / BCRC 81028 / 2530) (Pelodictyon luteolum).